The sequence spans 658 residues: Threonine--tRNA ligase (658 aa).

Residues 1–64 (MSCSISLSFP…GQSGQVEIIT (64 aa)) enclose the TGS domain. Positions 246–549 (DHRRLGREMD…LIENFAGHMP (304 aa)) are catalytic. Residues cysteine 343, histidine 394, and histidine 526 each coordinate Zn(2+).

It belongs to the class-II aminoacyl-tRNA synthetase family. As to quaternary structure, homodimer. Zn(2+) is required as a cofactor.

Its subcellular location is the cytoplasm. The enzyme catalyses tRNA(Thr) + L-threonine + ATP = L-threonyl-tRNA(Thr) + AMP + diphosphate + H(+). Functionally, catalyzes the attachment of threonine to tRNA(Thr) in a two-step reaction: L-threonine is first activated by ATP to form Thr-AMP and then transferred to the acceptor end of tRNA(Thr). Also edits incorrectly charged L-seryl-tRNA(Thr). The polypeptide is Threonine--tRNA ligase (Bartonella tribocorum (strain CIP 105476 / IBS 506)).